We begin with the raw amino-acid sequence, 1031 residues long: NACHT, LRR and PYD domains-containing protein 3 (1031 aa).

Positions Met1 to Glu93 constitute a Pyrin domain. Ser5 carries the post-translational modification Phosphoserine. At Tyr13 the chain carries Phosphotyrosine. Cys125 carries S-palmitoyl cysteine lipidation. Positions Arg126 to Lys129 are required for binding to phosphatidylinositol 4-phosphate (PtdIns4P). Residues Tyr131, Tyr135, and Tyr138 each carry the phosphotyrosine modification. Positions Tyr135 to Asp207 constitute an FISNA domain. Ser156 carries the post-translational modification Phosphoserine. Thr164 serves as a coordination point for ATP. Ser195 and Ser198 each carry phosphoserine. In terms of domain architecture, NACHT spans His217–Leu533. Residue Gly223–Thr230 coordinates ATP. Phosphoserine is present on residues Ser262 and Ser292. A Glycyl lysine isopeptide (Lys-Gly) (interchain with G-Cter in ubiquitin) cross-link involves residue Lys321. Ser331 carries the post-translational modification Phosphoserine. Residues Leu352–Gln356 carry the KFERQ-like motif 1 motif. Lys427 is covalently cross-linked (Glycyl lysine isopeptide (Lys-Gly) (interchain with G-Cter in ubiquitin)). His519 lines the ATP pocket. The KFERQ-like motif 2 signature appears at Lys601 to Glu605. Lys687 is covalently cross-linked (Glycyl lysine isopeptide (Lys-Gly) (interchain with G-Cter in ubiquitin)). Phosphoserine is present on residues Ser723 and Ser730. LRR repeat units lie at residues Asn737–Cys757, Asn766–Ser787, Lys794–Cys814, Asn823–Ser844, and Ser851–Cys871. Residues Gln793 to Glu797 carry the KFERQ-like motif 3 motif. Position 801 is a phosphoserine (Ser801). S-palmitoyl cysteine attachment occurs at residues Cys832, Cys833, and Cys839. Residue Tyr856 is modified to Phosphotyrosine. A Glycyl lysine isopeptide (Lys-Gly) (interchain with G-Cter in ubiquitin) cross-link involves residue Lys873. 4 LRR repeats span residues Asn880–Ser901, Asn908–Glu929, Lys937–Thr958, and Ser965–Glu986. Residue Cys953 is the site of S-palmitoyl cysteine attachment. Residue Lys968 forms a Glycyl lysine isopeptide (Lys-Gly) (interchain with G-Cter in ubiquitin) linkage. The KFERQ-like motif 4 motif lies at Glu986 to Gln990. Ser1030 is modified (phosphoserine).

It belongs to the NLRP family. In terms of assembly, sensor component of NLRP3 inflammasomes; inflammasomes are supramolecular complexes that assemble in the cytosol in response to pathogens and other damage-associated signals and play critical roles in innate immunity and inflammation. The core of NLRP3 inflammasomes consists of a signal sensor component (NLRP3), an adapter (PYCARD/ASC), which recruits an effector pro-inflammatory caspase (CASP1 and, possibly, CASP4 and CASP5). Homodecamer; inactive NLRP3 forms homodecameric double-ring cages that hide pyrin domains within NACHT-LRR rings to avoid premature activation. Interacts (via pyrin domain) with PYCARD/ASC (via pyrin domain); interaction is direct. Interacts (via LRR repeat domain) with NEK7 (via N-terminus); the interaction is required for the formation of the complex NLRP3:PYCARD, oligomerization of PYCARD/ASC and activation of CASP1. Interacts (via LRR repeat domain) with NR4A1/Nur77 (via N-terminus); the interaction is direct, requires activation of NR4A1 by its ligands NBRE-containing dsDNA and lipopolysaccharide, and stimulates the association of NLRP3 with NEK7 for non-canonical NLRP3 inflammasome activation. Interacts with CARD8; leading to inhibit formation of the NLRP3 inflammasome. Interacts with MEFV; this interaction targets NLRP3 to degradation by autophagy, hence preventing excessive IL1B- and IL18-mediated inflammation. Interacts with EIF2AK2/PKR; this interaction requires EIF2AK2 activity, is accompanied by EIF2AK2 autophosphorylation and promotes inflammasome assembly in response to specific stimuli. Interacts with GBP5 (via DAPIN domain); this interaction promotes inflammasome assembly in response to microbial and soluble, but not crystalline, agents. Interacts with PML (isoform PML-1) (via the leucine-rich repeat (LRR) domain); PML-mediated increase in NLRP3 inflammasome activation does not depend upon this interaction. Interacts (via NACHT domain) with DHX33 (via DEAH box); NLRP3 activation in presence of cytosolic dsRNA is mediated by DHX33. Interacts (via NACHT and LRR domains) with ARRB2; this interaction is direct and inducible by polyunsaturated fatty acids (PUFAs). Interacts (via NACHT domain) with DDX3X under both LPS-primed and inflammasome-activating conditions. Interacts with IRF4 (via the LRR domain); this interaction is direct and is required for optimal IRF4 binding to IL4 promoter and efficient IL4 transactivation during differentiation of Th2 helper T-cells. Interacts with MAVS; promoting localization to mitochondria and activation of the NLRP3 inflammasome. Interacts with MARK4; promoting localization of NLRP3 to the microtubule organizing center (MTOC). Interacts with TRIM50; this interaction also promotes NLRP3 oligomerization and subsequent inflammasome activation. Interacts with IRGM; preventing NLRP3 inflammasome assembly and promoting NLRP3 degradation. Interacts (via KFERQ-like motifs) with HSPA8/HSC70; promoting NLRP3 degradation by the chaperone-mediated autophagy pathway. Interacts (via NACHT and LLR domains) with ABHD8; this interaction is enhanced in the presence of NLRP3 inflammasome inducers, such as ATP, nigericin, silica, or alum. Interaction with ABHD8 leads the recruitment of ZDHHC12, hence facilitating NLRP3 palmitoylation and degradation by the chaperone-mediated autophagy pathway (CMA), therefore attenuating NLRP3 inflammasome activation. Phosphorylation at Ser-198 by MAPK8/JNK1 increases inflammasome activation by promoting deubiquitination by BRCC3 and NLRP3 homooligomerization. Phosphorylation at Ser-801 by CSNK1A1 prevents inflammasome activation by preventing NEK7 recruitment. Phosphorylation at Ser-5 in the pyrin domain inhibits homomultimerization of NLRP3 and activation of the NLRP3 inflammasome: dephosphorylation by protein phosphatase 2A (PP2A) promotes assembly of the NLRP3 inflammasome. Phosphorylation at Ser-292 by PKD/PRKD1 promotes NLRP3 inflammasome assembly. Phosphorylation by ERK1/MAPK3 promotes NLRP3 inflammasome assembly. Phosphorylation by BTK (at Tyr-131, Tyr-135 and Tyr-138) in the region that mediates binding to phosphatidylinositol phosphate, promotes relocalization of NLRP3 and assembly of the NLRP3 inflammasome. Phosphorylation at Tyr-856 inhibits NLRP3 inflammasome assembly: dephosphorylation by PTPN22 promotes inflammasome activation. Phosphorylated by LATS1 and LATS2 at Ser-262 following palmitoylation by ZDHHC1, promoting its relocalization to the microtubule organizing center (MTOC), where NLRP3 is activated by NEK7, leading to inflammasome assembly and activation. In terms of processing, ubiquitinated; undergoes both 'Lys-48'- and 'Lys-63'-linked polyubiquitination. Ubiquitination does not lead to degradation, but inhibits inflammasome activation. Deubiquitination is catalyzed by BRCC3 and associated with NLRP3 activation and inflammasome assembly. This process can be induced by the activation of Toll-like receptors (by LPS), through a non-transcriptional pathway dependent on the mitochondrial production of reactive oxygen species, and by ATP. Ubiquitinated by TRIM31 via 'Lys-48'-linked ubiquitination, leading to its degradation by the proteasome. Ubiquitinated at Lys-687 by the SCF(FBXL2) complex, leading to its degradation by the proteasome. Ubiquitinated by TRIM35 via 'lys-48' and 'Lys-63'-linked ubiquitination leading to inhibition of NLRP3 inflammasome activation. Undergoes 'Lys-27'-linked polyubiquitination by MARCHF5, leading to NLRP3-NEK7 complex formation and NLRP3 oligomerization. Post-translationally, palmitoylation by ZDHHC12 promotes NLRP3 degradation by the chaperone-mediated autophagy pathway (CMA) and therefore limits NLRP3 inflammasome activation. Interaction with ZDHHC12, and hence NLRP3 palmitoylation, is greatly enhanced by ABHD8. Following palmitoylation, HSPA8/HSC70 recognizes and binds the KFERQ-like motifs on NLRP3 and promotes NLRP3 recruitment to lysosomes, where it is degraded via the chaperone-mediated autophagy pathway in a LAMP2-dependent process. Palmitoylation at Cys-832 and Cys-833 by ZDHHC5 enhances its binding to NEK7 leading to inflammasome assembly and activation. Palmitoylation at Cys-125 and Cys-953 by ZDHHC1 facilitates phosphorylation at Ser-262 by LATS1 and LATS2, promoting its relocalization to the microtubule organizing center (MTOC), where NLRP3 is activated by NEK7, leading to inflammasome assembly and activation. Depalmitoylated by ABHD17A. Degraded via selective autophagy following interaction with IRGM. IRGM promotes NLRP3 recruitment to autophagosome membranes, promoting its SQSTM1/p62-dependent autophagy-dependent degradation.

Its subcellular location is the cytoplasm. It is found in the cytosol. The protein localises to the inflammasome. The protein resides in the cytoskeleton. It localises to the microtubule organizing center. Its subcellular location is the golgi apparatus membrane. It is found in the endoplasmic reticulum. The protein localises to the mitochondrion. The protein resides in the secreted. It localises to the nucleus. It carries out the reaction ATP + H2O = ADP + phosphate + H(+). Under resting conditions, NLRP3 binds ADP and is autoinhibited. Inactive NLRP3 forms homodecameric double-ring cages that hide pyrin domains within NACHT-LRR rings to avoid premature activation. NLRP3 activation stimuli include extracellular ATP, nigericin, reactive oxygen species, crystals of monosodium urate or cholesterol, amyloid-beta fibers, environmental or industrial particles and nanoparticles, such as asbestos, silica, aluminum salts, cytosolic dsRNA, etc. Almost all stimuli trigger intracellular K(+) efflux. These stimuli lead to membrane perturbations that induce activation of NLRP3. Upon activation, NLRP3 is transported to microtubule organizing center (MTOC), where it is unlocked by NEK7, leading to its relocalization to dispersed trans-Golgi network (dTGN) vesicle membranes and recruitment of PYCARD/ASC for the formation of an active inflammasome complex. NEK7-activated NLRP3 forms a disk-shaped inflammasome. NLRP3 and PYCARD/ASC interact via their respective pyrin domains; interaction initiates speck formation (nucleation) which greatly enhances further addition of soluble PYCARD/ASC molecules to the speck in a prion-like polymerization process. Clustered PYCARD/ASC nucleates the formation of CASP1 filaments through the interaction of their respective CARD domains, acting as a platform for CASP1 polymerization and activation. Active CASP1 then processes IL1B and IL18 precursors, leading to the release of mature cytokines in the extracellular milieu and inflammatory response. NLRP3 inflammasome assembly is inhibited by IRGM, which impedes NLRP3 oligomerization. NLRP3 inflammasome is inhibited by cyclic AMP (cAMP), which directly binds NLRP3; inhibition is relieved by calcium-sensing receptor CASR, which inhibits production of cAMP. Specifically inhibited by sulfonylurea MCC950 (also named CP-456,773, CRID3), a potent and specific small-molecule inhibitor of the NLRP3 inflammasome that acts by preventing ATP hydrolysis. Sensor component of the NLRP3 inflammasome, which mediates inflammasome activation in response to defects in membrane integrity, leading to secretion of inflammatory cytokines IL1B and IL18 and pyroptosis. In response to pathogens and other damage-associated signals that affect the integrity of membranes, initiates the formation of the inflammasome polymeric complex composed of NLRP3, CASP1 and PYCARD/ASC. Recruitment of pro-caspase-1 (proCASP1) to the NLRP3 inflammasome promotes caspase-1 (CASP1) activation, which subsequently cleaves and activates inflammatory cytokines IL1B and IL18 and gasdermin-D (GSDMD), promoting cytokine secretion and pyroptosis. Activation of NLRP3 inflammasome is also required for HMGB1 secretion; stimulating inflammatory responses. Under resting conditions, ADP-bound NLRP3 is autoinhibited. NLRP3 activation stimuli include extracellular ATP, nigericin, reactive oxygen species, crystals of monosodium urate or cholesterol, amyloid-beta fibers, environmental or industrial particles and nanoparticles, such as asbestos, silica, aluminum salts, cytosolic dsRNA, etc. Almost all stimuli trigger intracellular K(+) efflux. These stimuli lead to membrane perturbation and activation of NLRP3. Upon activation, NLRP3 is transported to microtubule organizing center (MTOC), where it is unlocked by NEK7, leading to its relocalization to dispersed trans-Golgi network (dTGN) vesicle membranes and formation of an active inflammasome complex. Associates with dTGN vesicle membranes by binding to phosphatidylinositol 4-phosphate (PtdIns4P). Shows ATPase activity. Functionally, independently of inflammasome activation, regulates the differentiation of T helper 2 (Th2) cells and has a role in Th2 cell-dependent asthma and tumor growth. During Th2 differentiation, required for optimal IRF4 binding to IL4 promoter and for IRF4-dependent IL4 transcription. Binds to the consensus DNA sequence 5'-GRRGGNRGAG-3'. May also participate in the transcription of IL5, IL13, GATA3, CCR3, CCR4 and MAF. The sequence is that of NACHT, LRR and PYD domains-containing protein 3 (NLRP3) from Bos taurus (Bovine).